We begin with the raw amino-acid sequence, 456 residues long: Bifunctional protein GlmU (456 aa).

The interval 1–229 (MLNSAMSVVI…ISETDGVNNR (229 aa)) is pyrophosphorylase. UDP-N-acetyl-alpha-D-glucosamine-binding positions include 11–14 (LAAG), K25, Q76, 81–82 (GT), 103–105 (YGD), G140, E154, N169, and N227. D105 is a Mg(2+) binding site. N227 contacts Mg(2+). Residues 230-250 (LQLSRLERIYQAEQAEKLLLS) form a linker region. The tract at residues 251 to 456 (GVMLRDPARF…QGWQRPVKKK (206 aa)) is N-acetyltransferase. UDP-N-acetyl-alpha-D-glucosamine is bound by residues R333 and K351. Residue H363 is the Proton acceptor of the active site. UDP-N-acetyl-alpha-D-glucosamine is bound by residues Y366 and N377. Residues A380, 386-387 (NY), S405, A423, and R440 contribute to the acetyl-CoA site.

It in the N-terminal section; belongs to the N-acetylglucosamine-1-phosphate uridyltransferase family. This sequence in the C-terminal section; belongs to the transferase hexapeptide repeat family. As to quaternary structure, homotrimer. The cofactor is Mg(2+).

The protein resides in the cytoplasm. The catalysed reaction is alpha-D-glucosamine 1-phosphate + acetyl-CoA = N-acetyl-alpha-D-glucosamine 1-phosphate + CoA + H(+). It catalyses the reaction N-acetyl-alpha-D-glucosamine 1-phosphate + UTP + H(+) = UDP-N-acetyl-alpha-D-glucosamine + diphosphate. Its pathway is nucleotide-sugar biosynthesis; UDP-N-acetyl-alpha-D-glucosamine biosynthesis; N-acetyl-alpha-D-glucosamine 1-phosphate from alpha-D-glucosamine 6-phosphate (route II): step 2/2. It participates in nucleotide-sugar biosynthesis; UDP-N-acetyl-alpha-D-glucosamine biosynthesis; UDP-N-acetyl-alpha-D-glucosamine from N-acetyl-alpha-D-glucosamine 1-phosphate: step 1/1. The protein operates within bacterial outer membrane biogenesis; LPS lipid A biosynthesis. In terms of biological role, catalyzes the last two sequential reactions in the de novo biosynthetic pathway for UDP-N-acetylglucosamine (UDP-GlcNAc). The C-terminal domain catalyzes the transfer of acetyl group from acetyl coenzyme A to glucosamine-1-phosphate (GlcN-1-P) to produce N-acetylglucosamine-1-phosphate (GlcNAc-1-P), which is converted into UDP-GlcNAc by the transfer of uridine 5-monophosphate (from uridine 5-triphosphate), a reaction catalyzed by the N-terminal domain. The sequence is that of Bifunctional protein GlmU from Salmonella agona (strain SL483).